We begin with the raw amino-acid sequence, 210 residues long: Thymidylate kinase (210 aa).

10–17 provides a ligand contact to ATP; it reads GPEGAGKS.

It belongs to the thymidylate kinase family.

The catalysed reaction is dTMP + ATP = dTDP + ADP. Phosphorylation of dTMP to form dTDP in both de novo and salvage pathways of dTTP synthesis. The polypeptide is Thymidylate kinase (Pseudomonas fluorescens (strain ATCC BAA-477 / NRRL B-23932 / Pf-5)).